The sequence spans 304 residues: bZIP transcription factor 50 (304 aa).

The Cytoplasmic portion of the chain corresponds to 1–222 (MDVEFFADLD…MQESAVLTET (222 aa)). Disordered stretches follow at residues 26–60 (GSGV…SREA) and 94–163 (GEEE…ERKK). Residues 45–59 (SPESVSSRRPSPSRE) are compositionally biased toward low complexity. The span at 127–139 (EKEDVEAEVDGDD) shows a compositional bias: acidic residues. A bZIP domain is found at 141 to 203 (MSKKKRRQMR…NMALRQSLLK (63 aa)). Residues 143 to 167 (KKKRRQMRNRDSAMKSRERKKMYVK) form a basic motif region. Residues 150-163 (RNRDSAMKSRERKK) show a composition bias toward basic and acidic residues. The interval 169–183 (LETKSKYLEAECRRL) is leucine-zipper. A helical membrane pass occupies residues 223–243 (LPLVSLLWLVSIVCLLPVPGL). Over 244–304 (PNRNPVARSS…GPFRLAAAAC (61 aa)) the chain is Lumenal.

The protein belongs to the bZIP family.

The protein localises to the endoplasmic reticulum membrane. It localises to the nucleus. With respect to regulation, transcriptionally activated by IRE1 in response to endoplasmic reticulum (ER) stress. IRE1 cleaves a 20-bp fragment causing a frameshift of the mRNA transcript, leading to a nuclear isoform of the BZIP50 activator. Its function is as follows. Transcription factor involved in endoplasmic reticulum (ER) stress response. Acts downstream of the ER stress sensors IRE1, BZIP39 and BZIP60 to activate BiP chaperone genes. This Oryza sativa subsp. japonica (Rice) protein is bZIP transcription factor 50.